Reading from the N-terminus, the 1068-residue chain is Self-sufficient cytochrome P450 monooxygenase CYP505U2 (1068 aa).

Heme is bound at residue Cys408. Residues 464-498 form a disordered region; the sequence is TTAGMVPESVQSLRQAQKSGKPGNSKSSANESMVG. The segment covering 472–498 has biased composition (polar residues); sequence SVQSLRQAQKSGKPGNSKSSANESMVG. Residues 505-646 enclose the Flavodoxin-like domain; that stretch reads VSIFYGSNSG…DLEKWEESIL (142 aa). FMN-binding positions include 511-515 and 590-622; these read SNSGS and VFGC…QRVA. Residues 679–909 enclose the FAD-binding FR-type domain; sequence KEFLEATVTS…RRSNPAFHPP (231 aa).

It in the N-terminal section; belongs to the cytochrome P450 family. Requires FAD as cofactor. FMN serves as cofactor. The cofactor is heme.

The enzyme catalyses 2 oxidized [cytochrome P450] + NADPH = 2 reduced [cytochrome P450] + NADP(+) + H(+). It catalyses the reaction an organic molecule + reduced [NADPH--hemoprotein reductase] + O2 = an alcohol + oxidized [NADPH--hemoprotein reductase] + H2O + H(+). It carries out the reaction dodecanoate + reduced [NADPH--hemoprotein reductase] + O2 = 3-hydroxydodecanoate + oxidized [NADPH--hemoprotein reductase] + H2O + H(+). The catalysed reaction is dodecanoate + reduced [NADPH--hemoprotein reductase] + O2 = 7-hydroxydodecanoate + oxidized [NADPH--hemoprotein reductase] + H2O + H(+). The enzyme catalyses dodecan-1-ol + reduced [NADPH--hemoprotein reductase] + O2 = 1,4-dodecanediol + oxidized [NADPH--hemoprotein reductase] + H2O + H(+). It catalyses the reaction dodecan-1-ol + reduced [NADPH--hemoprotein reductase] + O2 = 1,3-dodecanediol + oxidized [NADPH--hemoprotein reductase] + H2O + H(+). Functionally, self-sufficient cytochrome P450 monooxygenase that catalyzes the regioselective in-chain hydroxylation of alkanes, fatty alcohols, and fatty acids. Preferentially hydroxylates 1-dodecanol at C3 and C4 (positions omega-8 and omega-9). It is very likely that CYP505U2 prefers dodecanol, and probably other fatty alcohols, over fatty acids as substrates. Does not show any significant activity toward tetradecanoic acid. The polypeptide is Self-sufficient cytochrome P450 monooxygenase CYP505U2 (Exserohilum turcicum (strain 28A) (Northern leaf blight fungus)).